The chain runs to 524 residues: mRNA cap guanine-N(7) methyltransferase (524 aa).

The tract at residues 1–155 (MSDKEAGVAS…DKKRAHDEAE (155 aa)) is disordered. A compositionally biased stretch (basic and acidic residues) spans 19–40 (NKDEVDVKNTEEHSKQESKSDI). The span at 68 to 77 (NNKVISSVYN) shows a compositional bias: polar residues. Residues 90–99 (KTTDKYDKYG) are compositionally biased toward basic and acidic residues. Over residues 100–112 (SRSTPIATPTAPV) the composition is skewed to polar residues. The region spanning 214–522 (SPIYKLRNFN…FYIGFVFEKL (309 aa)) is the mRNA cap 0 methyltransferase domain. An mRNA-binding site is contributed by 223–224 (NN). Residues lysine 227, cysteine 251, aspartate 273, aspartate 319, glutamine 349, and tyrosine 354 each coordinate S-adenosyl-L-methionine.

It belongs to the class I-like SAM-binding methyltransferase superfamily. mRNA cap 0 methyltransferase family.

The protein localises to the nucleus. The catalysed reaction is a 5'-end (5'-triphosphoguanosine)-ribonucleoside in mRNA + S-adenosyl-L-methionine = a 5'-end (N(7)-methyl 5'-triphosphoguanosine)-ribonucleoside in mRNA + S-adenosyl-L-homocysteine. Its function is as follows. Responsible for methylating the 5'-cap structure of mRNAs. This is mRNA cap guanine-N(7) methyltransferase (ABD1) from Debaryomyces hansenii (strain ATCC 36239 / CBS 767 / BCRC 21394 / JCM 1990 / NBRC 0083 / IGC 2968) (Yeast).